The chain runs to 334 residues: Formamidase (334 aa).

In terms of domain architecture, CN hydrolase spans 14-260 (MLMGLVQYPV…WEIVTAEVFP (247 aa)). The Proton acceptor role is filled by glutamate 60. The active-site Proton donor is the lysine 133. Residue cysteine 166 is the Nucleophile of the active site.

It belongs to the carbon-nitrogen hydrolase superfamily. Aliphatic amidase family.

The catalysed reaction is formamide + H2O = formate + NH4(+). In terms of biological role, is an aliphatic amidase with a restricted substrate specificity, as it only hydrolyzes formamide. This chain is Formamidase, found in Nitratidesulfovibrio vulgaris (strain DP4) (Desulfovibrio vulgaris).